The following is a 1709-amino-acid chain: Protein SHORTAGE IN CHIASMATA 1 homolog (1709 aa).

Basic and acidic residues-rich tracts occupy residues 532 to 542 (PKLQDEDKHSD), 552 to 568 (DPQK…EGGT), and 1601 to 1613 (ESFR…DTPS). Disordered regions lie at residues 532 to 586 (PKLQ…SSFP) and 1566 to 1662 (KRKA…DPTW).

It belongs to the XPF family. As to quaternary structure, interacts (via C-terminus) with PTD. Interacts with ZIP4. In terms of tissue distribution, highly expressed in anthers and pistil during meiosis. Expressed in pollen mother cells (PMCs) during meiosis. Expressed at low levels in roots, shoots, leaves, flowers, and glumes.

Its subcellular location is the chromosome. It localises to the nucleus. The protein resides in the cytoplasm. The protein localises to the cell membrane. Functionally, essential for normal crossover (CO) formation during meiosis. Essential component for the formation of class I meiotic COs. Interacts with PTD, another meiotic component, to regulate CO formation, possibly by stabilizing the recombination intermediates during meiosis. SHOC1 and PTD may form transient heterotrimeric or heterotetrameric complexes with HEI10 and/or ZIP4 to promote class I COs formation. Does not seem to be involved in early meiotic recombination steps involving double-strand break (DSB) formation, processing, and single-strand invasion. Does not seem to be involved in homologous pairing or synaptonemal complex (SC) assembly. The chain is Protein SHORTAGE IN CHIASMATA 1 homolog from Oryza sativa subsp. japonica (Rice).